The primary structure comprises 172 residues: Ribosome maturation factor RimM (172 aa).

Residues 95–168 (DDGEFYYHEI…RVDVEILEGL (74 aa)) enclose the PRC barrel domain.

The protein belongs to the RimM family. Binds ribosomal protein uS19.

The protein localises to the cytoplasm. An accessory protein needed during the final step in the assembly of 30S ribosomal subunit, possibly for assembly of the head region. Essential for efficient processing of 16S rRNA. May be needed both before and after RbfA during the maturation of 16S rRNA. It has affinity for free ribosomal 30S subunits but not for 70S ribosomes. The protein is Ribosome maturation factor RimM of Streptococcus pneumoniae (strain P1031).